Consider the following 612-residue polypeptide: MIQVLLVIICLEAFPYQGSSIILESGNVNDYEVVYPRKVTALSKGAVHPKYEDAMQYEFKVNGEPVVLHLEKNKGLFSEDYSEIHYSPDGREITTYPLVEDHCYYHGRIQNDADSSASISACNGLKGHFKLQGEMYLIEPFKLPDSEAHAVFKYENVEKEDEAPKMCGVTETNWESDEPIKKASLLNLTPEQQAYLDAKKYVEFVVVLDHGMYKKYKDDLDKIKRRIYEIVNTMNEMFIPLNICVALTGLEIWSKGDKINVTSESWFTLILFTNWRGADLLKRKSHDNAQLLTNTDFDGSTIGRAHIGSMCHPYLSVGIIQDYSPVNLLVASTMAHEMGHNLGMHHDNDTCTCGAPSCVMAAAISKDPSKLFSNCSQEYQRKYLIKNRPQCLLNKPLRTDIISPPVCGNELLEVGEECDCGTPENCRDPCCNATTCKLTPGSQCVEGLCCDQCRFRKTGTECRAAKHDCDLPESCTGQSADCPMDDFQRNGHPCQNNNGYCYNGKCPTMENQCIDLVGPKATVAEDSCFKDNQKGNDYGYCRKENGKKIPCEPQDVKCGRLYCNDNSPGQNNPCKCIYFPRNEDRGMVLPGTKCADGKVCSNRHCVDVATAY.

Residues 1–20 (MIQVLLVIICLEAFPYQGSS) form the signal peptide. Positions 21–187 (IILESGNVND…EPIKKASLLN (167 aa)) are excised as a propeptide. The Peptidase M12B domain occupies 200 to 396 (KYVEFVVVLD…NRPQCLLNKP (197 aa)). Position 203 (glutamate 203) interacts with Ca(2+). A glycan (N-linked (GlcNAc...) asparagine) is linked at asparagine 260. A Ca(2+)-binding site is contributed by aspartate 287. Intrachain disulfides connect cysteine 311–cysteine 391, cysteine 351–cysteine 375, and cysteine 353–cysteine 358. Histidine 336 contacts Zn(2+). Residue glutamate 337 is part of the active site. 2 residues coordinate Zn(2+): histidine 340 and histidine 346. Asparagine 348 carries N-linked (GlcNAc...) asparagine glycosylation. An N-linked (GlcNAc...) asparagine glycan is attached at asparagine 374. Residues cysteine 391, asparagine 394, valine 406, asparagine 409, leucine 411, glutamate 413, glutamate 416, and aspartate 419 each contribute to the Ca(2+) site. In terms of domain architecture, Disintegrin spans 404–490 (PPVCGNELLE…DCPMDDFQRN (87 aa)). Disulfide bonds link cysteine 407–cysteine 436, cysteine 418–cysteine 431, cysteine 420–cysteine 426, cysteine 430–cysteine 453, cysteine 444–cysteine 450, cysteine 449–cysteine 475, cysteine 462–cysteine 482, cysteine 469–cysteine 501, cysteine 494–cysteine 506, cysteine 513–cysteine 563, cysteine 528–cysteine 574, cysteine 541–cysteine 551, cysteine 558–cysteine 600, and cysteine 594–cysteine 605. Asparagine 432 is a glycosylation site (N-linked (GlcNAc...) asparagine). The D/ECD-tripeptide motif lies at 468–470 (DCD). Positions 470, 471, 473, and 485 each coordinate Ca(2+).

Belongs to the venom metalloproteinase (M12B) family. P-III subfamily. P-IIIa sub-subfamily. In terms of assembly, monomer. Requires Zn(2+) as cofactor. In terms of processing, highly glycosylated. In terms of tissue distribution, expressed by the venom gland.

It localises to the secreted. With respect to regulation, inhibited by EDTA and o-phenanthroline. Not inhibited by PMSF, benzamidine, irreversible serine-proteinase inhibitors and cysteine proteinase inhibitor E-64. Its function is as follows. Potent activator of prothrombin (F2). Does not elicit any hemorrhagic response. Barely inhibits collagen-induced platelet aggregation. Binds neither collagen, nor the jararhagin monoclonal antibody MAJar3. Hydrolyzes the Aalpha-chain of fibrin and fibrinogen, without affecting the Bbeta- and gamma-chains. Is capable of triggering endothelial pro-inflammatory and procoagulant cell responses, but fails to trigger apoptosis. Induces von Willebrand factor release, and the expression of both ICAM1 and E-selectin (SELE) (without increase in VCAM1) in endothelial cells (HUVEC). Is also able to up-regulate the synthesis of the coagulation factor TF (F3). Enhances nitric oxide (NO) generation, prostacyclin production and interleukin-8 release. The sequence is that of Zinc metalloproteinase-disintegrin-like berythractivase from Bothrops erythromelas (Caatinga lance head).